We begin with the raw amino-acid sequence, 315 residues long: Fructose-1,6-bisphosphatase class 1 (315 aa).

Residues Glu-90, Asp-111, Leu-113, and Asp-114 each coordinate Mg(2+). Residues 114–117 (DGSS), Tyr-222, and Lys-253 contribute to the substrate site. Glu-259 contacts Mg(2+).

The protein belongs to the FBPase class 1 family. In terms of assembly, homotetramer. Mg(2+) serves as cofactor.

It localises to the cytoplasm. The catalysed reaction is beta-D-fructose 1,6-bisphosphate + H2O = beta-D-fructose 6-phosphate + phosphate. Its pathway is carbohydrate biosynthesis; gluconeogenesis. This Trichlorobacter lovleyi (strain ATCC BAA-1151 / DSM 17278 / SZ) (Geobacter lovleyi) protein is Fructose-1,6-bisphosphatase class 1.